Consider the following 261-residue polypeptide: 5'-nucleotidase SurE (261 aa).

A divalent metal cation is bound by residues Asp-8, Asp-9, Ser-39, and Asn-91.

The protein belongs to the SurE nucleotidase family. The cofactor is a divalent metal cation.

It is found in the cytoplasm. The enzyme catalyses a ribonucleoside 5'-phosphate + H2O = a ribonucleoside + phosphate. Functionally, nucleotidase that shows phosphatase activity on nucleoside 5'-monophosphates. In Polaromonas naphthalenivorans (strain CJ2), this protein is 5'-nucleotidase SurE.